Reading from the N-terminus, the 602-residue chain is Glutamyl-tRNA(Gln) amidotransferase subunit B, mitochondrial (602 aa).

Belongs to the GatB/GatE family. GatB subfamily. In terms of assembly, subunit of the heterotrimeric GatCAB amidotransferase (AdT) complex, composed of A, B and C subunits.

It is found in the mitochondrion. It carries out the reaction L-glutamyl-tRNA(Gln) + L-glutamine + ATP + H2O = L-glutaminyl-tRNA(Gln) + L-glutamate + ADP + phosphate + H(+). In terms of biological role, allows the formation of correctly charged Gln-tRNA(Gln) through the transamidation of misacylated Glu-tRNA(Gln) in the mitochondria. The reaction takes place in the presence of glutamine and ATP through an activated gamma-phospho-Glu-tRNA(Gln). This is Glutamyl-tRNA(Gln) amidotransferase subunit B, mitochondrial from Paracoccidioides lutzii (strain ATCC MYA-826 / Pb01) (Paracoccidioides brasiliensis).